Reading from the N-terminus, the 456-residue chain is Bifunctional protein GlmU (456 aa).

The segment at 1–229 is pyrophosphorylase; the sequence is MLNSAMSVVI…ISETDGVNNR (229 aa). Residues 11-14, Lys25, Gln76, 81-82, 103-105, Gly140, Glu154, Asn169, and Asn227 contribute to the UDP-N-acetyl-alpha-D-glucosamine site; these read LAAG, GT, and YGD. Mg(2+) is bound at residue Asp105. Asn227 contributes to the Mg(2+) binding site. A linker region spans residues 230–250; that stretch reads LQLSRLERIYQAEQAEKLLLS. Positions 251–456 are N-acetyltransferase; that stretch reads GVMLRDPARF…QGWQRPVKKK (206 aa). UDP-N-acetyl-alpha-D-glucosamine-binding residues include Arg333 and Lys351. The Proton acceptor role is filled by His363. Positions 366 and 377 each coordinate UDP-N-acetyl-alpha-D-glucosamine. Acetyl-CoA is bound by residues Ala380, 386-387, Ser405, Ala423, and Arg440; that span reads NY.

The protein in the N-terminal section; belongs to the N-acetylglucosamine-1-phosphate uridyltransferase family. It in the C-terminal section; belongs to the transferase hexapeptide repeat family. In terms of assembly, homotrimer. Mg(2+) serves as cofactor.

It localises to the cytoplasm. The enzyme catalyses alpha-D-glucosamine 1-phosphate + acetyl-CoA = N-acetyl-alpha-D-glucosamine 1-phosphate + CoA + H(+). The catalysed reaction is N-acetyl-alpha-D-glucosamine 1-phosphate + UTP + H(+) = UDP-N-acetyl-alpha-D-glucosamine + diphosphate. It functions in the pathway nucleotide-sugar biosynthesis; UDP-N-acetyl-alpha-D-glucosamine biosynthesis; N-acetyl-alpha-D-glucosamine 1-phosphate from alpha-D-glucosamine 6-phosphate (route II): step 2/2. The protein operates within nucleotide-sugar biosynthesis; UDP-N-acetyl-alpha-D-glucosamine biosynthesis; UDP-N-acetyl-alpha-D-glucosamine from N-acetyl-alpha-D-glucosamine 1-phosphate: step 1/1. Its pathway is bacterial outer membrane biogenesis; LPS lipid A biosynthesis. Its function is as follows. Catalyzes the last two sequential reactions in the de novo biosynthetic pathway for UDP-N-acetylglucosamine (UDP-GlcNAc). The C-terminal domain catalyzes the transfer of acetyl group from acetyl coenzyme A to glucosamine-1-phosphate (GlcN-1-P) to produce N-acetylglucosamine-1-phosphate (GlcNAc-1-P), which is converted into UDP-GlcNAc by the transfer of uridine 5-monophosphate (from uridine 5-triphosphate), a reaction catalyzed by the N-terminal domain. The polypeptide is Bifunctional protein GlmU (Salmonella typhi).